We begin with the raw amino-acid sequence, 330 residues long: uncharacterized protein (330 aa).

The protein belongs to the ornithine cyclodeaminase/mu-crystallin family.

Its subcellular location is the cytoplasm. This is an uncharacterized protein from Schizosaccharomyces pombe (strain 972 / ATCC 24843) (Fission yeast).